The following is a 114-amino-acid chain: Holo-[acyl-carrier-protein] synthase (114 aa).

Mg(2+) is bound by residues aspartate 5 and glutamate 50.

The protein belongs to the P-Pant transferase superfamily. AcpS family. Mg(2+) serves as cofactor.

It is found in the cytoplasm. The catalysed reaction is apo-[ACP] + CoA = holo-[ACP] + adenosine 3',5'-bisphosphate + H(+). Its function is as follows. Transfers the 4'-phosphopantetheine moiety from coenzyme A to a Ser of acyl-carrier-protein. The chain is Holo-[acyl-carrier-protein] synthase from Campylobacter curvus (strain 525.92).